We begin with the raw amino-acid sequence, 154 residues long: Protein X (154 aa).

The disordered stretch occupies residues 28 to 48 (RPLPGPLGTLPPASPPAVPTD). The tract at residues 68–117 (PCALRFTSARRMETTVNAHGNLPKVLHKRTLGLSAMSTTDLEAYFKDCVF) is mitochondrial targeting sequence.

The protein belongs to the orthohepadnavirus protein X family. May form homodimer. May interact with host CEBPA, CFLAR, CREB1, DDB1, E4F1, HBXIP, HSPD1/HSP60, NFKBIA, POLR2E and SMAD4. Interacts with host SMC5-SMC6 complex and induces its degradation. Interacts with host TRPC4AP; leading to prevent ubiquitination of TRPC4AP. Interacts with host PLSCR1; this interaction promotes ubiquitination and degradation of HBx and impairs HBx-mediated cell proliferation. A fraction may be phosphorylated in insect cells and HepG2 cells, a human hepatoblastoma cell line. Phosphorylated in vitro by host protein kinase C or mitogen-activated protein kinase. N-acetylated in insect cells.

The protein localises to the host cytoplasm. The protein resides in the host nucleus. Its subcellular location is the host mitochondrion. Its function is as follows. Multifunctional protein that plays a role in silencing host antiviral defenses and promoting viral transcription. Does not seem to be essential for HBV infection. May be directly involved in development of cirrhosis and liver cancer (hepatocellular carcinoma). Most of cytosolic activities involve modulation of cytosolic calcium. The effect on apoptosis is controversial depending on the cell types in which the studies have been conducted. May induce apoptosis by localizing in mitochondria and causing loss of mitochondrial membrane potential. May also modulate apoptosis by binding host CFLAR, a key regulator of the death-inducing signaling complex (DISC). Promotes viral transcription by using the host E3 ubiquitin ligase DDB1 to target the SMC5-SMC6 complex to proteasomal degradation. This host complex would otherwise bind to viral episomal DNA, and prevents its transcription. Moderately stimulates transcription of many different viral and cellular transcription elements. Promoters and enhancers stimulated by HBx contain DNA binding sites for NF-kappa-B, AP-1, AP-2, c-EBP, ATF/CREB, or the calcium-activated factor NF-AT. The chain is Protein X from Hepatitis B virus genotype B2 subtype adw (isolate China/patient4/1996) (HBV-B).